The following is a 644-amino-acid chain: Exoribonuclease 2 (644 aa).

One can recognise an RNB domain in the interval 189-516; the sequence is REDLTALNFV…NHRLLKAIIT (328 aa). An S1 motif domain is found at 561–643; the sequence is DTRFPAEIID…ETRNVVARPV (83 aa).

It belongs to the RNR ribonuclease family. RNase II subfamily.

The protein resides in the cytoplasm. It carries out the reaction Exonucleolytic cleavage in the 3'- to 5'-direction to yield nucleoside 5'-phosphates.. Involved in mRNA degradation. Hydrolyzes single-stranded polyribonucleotides processively in the 3' to 5' direction. This Yersinia enterocolitica serotype O:8 / biotype 1B (strain NCTC 13174 / 8081) protein is Exoribonuclease 2.